A 986-amino-acid chain; its full sequence is Probable serine/threonine-protein kinase DDB_G0272092 (986 aa).

Positions 1 to 107 (MARKIGSVRI…EYIVDTTKWY (107 aa)) constitute a C2 domain. 6 residues coordinate Ca(2+): Asp22, Asp28, Asp76, Asp78, Ser81, and Asp84. ANK repeat units follow at residues 137 to 167 (PEKS…DYTI), 171 to 201 (EGTP…RVSI), 205 to 238 (HGNT…GIND), 242 to 274 (LGET…IINH), 278 to 307 (TRDT…NVMI), and 312 to 344 (PSRT…WLNE). Residues 333–396 (EKVIEISDWL…LRAVRKIKDP (64 aa)) enclose the SAM domain. Residues 412–438 (HVENDNNNNNNNNNNNNNSQEQCNINN) show a composition bias toward low complexity. Disordered stretches follow at residues 412–520 (HVEN…SNTT) and 532–574 (TTLT…PEGP). Residues 439 to 448 (DSLGSGNRNS) show a composition bias toward polar residues. The span at 454 to 464 (QNQNNTLNNNN) shows a compositional bias: low complexity. The segment covering 465 to 476 (VESKSTGNLNSL) has biased composition (polar residues). 2 stretches are compositionally biased toward low complexity: residues 493 to 520 (NILS…SNTT) and 546 to 571 (TEST…TVTP). The Protein kinase domain maps to 601 to 870 (LTYNVLLGTG…ELLKIRDEYN (270 aa)). Residues 607-615 (LGTGASGKV) and Lys628 each bind ATP. Asp722 serves as the catalytic Proton acceptor. 2 stretches are compositionally biased toward low complexity: residues 901–913 (DSNN…NNNN) and 928–947 (SNSN…SDNN). The segment at 901–986 (DSNNINNNNN…SPMEPKSIKK (86 aa)) is disordered. Polar residues-rich tracts occupy residues 948–959 (ISEPATTDSITK) and 969–978 (LTRTRSSSSP).

It belongs to the protein kinase superfamily. TKL Ser/Thr protein kinase family. Requires Ca(2+) as cofactor.

It catalyses the reaction L-seryl-[protein] + ATP = O-phospho-L-seryl-[protein] + ADP + H(+). The enzyme catalyses L-threonyl-[protein] + ATP = O-phospho-L-threonyl-[protein] + ADP + H(+). This Dictyostelium discoideum (Social amoeba) protein is Probable serine/threonine-protein kinase DDB_G0272092.